A 315-amino-acid polypeptide reads, in one-letter code: Glutathione synthetase (315 aa).

Positions 125–310 (KLFTAWFSDL…ITGMLMDAIE (186 aa)) constitute an ATP-grasp domain. 151–207 (WEKHSDIILKPLDGMGGASIFRVKEGDPNLGVIAETLTEHGTRYCMAQNYLPAIKDG) serves as a coordination point for ATP. The Mg(2+) site is built by glutamate 281 and asparagine 283.

It belongs to the prokaryotic GSH synthase family. The cofactor is Mg(2+). Mn(2+) serves as cofactor.

It carries out the reaction gamma-L-glutamyl-L-cysteine + glycine + ATP = glutathione + ADP + phosphate + H(+). The protein operates within sulfur metabolism; glutathione biosynthesis; glutathione from L-cysteine and L-glutamate: step 2/2. This Escherichia coli O157:H7 protein is Glutathione synthetase.